We begin with the raw amino-acid sequence, 441 residues long: MAVAELSPSYKTQLKTCQQLSSSLSTRLSDHRKFSLRLLPRPVSVRGGIRCSVAPNQVQAPVAVPAEGQTGKPECYGIFCLTYDLKAEEETKTWKKMITIAVSGAAGMISNHLLFKLASGEVFGPDQPIALKLLGSERSFNALEGVAMELEDSLYPLLRAVSIGIDPYDIFQDAEWALLIGAKPRGPGMERADLLDINGQIFAEQGKALNAVASRNVKVIVVGNPCNTNALICLKNAPNIPAKNFHGLTRLDENRAKCQLALKAGVFYDKVSNMTIWGNHSTTQVPDFLNAKIDGLPVKTVIKDHKWLEEEFTVMIQKRGGALIQKWGRSSAASTAVSIADAIKSLVTPTPEGDWFSSAVYTNGNPYGIAEDLVFSMPCRSKGDGDYELVKDVVFDDYLRQRIKKSEEELLAEKRCTAHLTGEGVAVCDLPAGDTMLPGEM.

The N-terminal 51 residues, 1-51 (MAVAELSPSYKTQLKTCQQLSSSLSTRLSDHRKFSLRLLPRPVSVRGGIRC), are a transit peptide targeting the chloroplast. A disulfide bridge links Cys75 with Cys80. 104 to 110 (GAAGMIS) is an NADP(+) binding site. Positions 185 and 191 each coordinate substrate. Asn198 provides a ligand contact to NADP(+). Residue Gln205 coordinates NAD(+). Residue 222 to 224 (VGN) participates in NADP(+) binding. Substrate is bound by residues Asn224 and Arg255. His280 functions as the Proton acceptor in the catalytic mechanism. Residues Cys416 and Cys428 are joined by a disulfide bond.

Belongs to the LDH/MDH superfamily. MDH type 2 family. As to quaternary structure, homodimer.

It is found in the plastid. The protein localises to the chloroplast. It carries out the reaction (S)-malate + NADP(+) = oxaloacetate + NADPH + H(+). With respect to regulation, chloroplast NADP-MDH is activated upon illumination. In order to be enzymatically active, disulfide bridges on the protein must be reduced by thioredoxin which receives electrons from ferredoxin and the electron transport system of photosynthesis. In terms of biological role, the chloroplastic, NADP-dependent form is essential for the photosynthesis C4 cycle, which allows plants to circumvent the problem of photorespiration. In C4 plants, NADP-MDH activity acts to convert oxaloacetate to malate in chloroplasts of mesophyll cells for transport to the bundle sheath cells. The polypeptide is Malate dehydrogenase [NADP], chloroplastic (MDH1) (Mesembryanthemum crystallinum (Common ice plant)).